The chain runs to 431 residues: Nocturnin (431 aa).

The transit peptide at 1–75 (MFHSPRRLCS…SMGTGTSRLY (75 aa)) directs the protein to the mitochondrion. Residues 20 to 31 (LRRLPAPGLRRP) show a composition bias toward low complexity. The tract at residues 20–41 (LRRLPAPGLRRPLSPPAAVPRP) is disordered. Residues 32–41 (LSPPAAVPRP) show a composition bias toward pro residues. Glu-195 serves as a coordination point for Mg(2+). Residues Glu-195, 219–221 (KPW), Asn-263, 286–289 (HLKA), and 324–326 (DFN) contribute to the substrate site. Residues 343–353 (NLNSAYKLLSA) are interaction with PPARG. Substrate is bound at residue His-414.

This sequence belongs to the CCR4/nocturin family. Interacts with PPARG. The cofactor is Mg(2+). In terms of tissue distribution, adipose tissue. Expression is higher in subcutaneous adipose tissue as compared to visceral adipose tissue.

The protein localises to the cytoplasm. It localises to the nucleus. The protein resides in the perinuclear region. It is found in the mitochondrion. It catalyses the reaction NADP(+) + H2O = phosphate + NAD(+). The catalysed reaction is NADPH + H2O = phosphate + NADH. In terms of biological role, phosphatase which catalyzes the conversion of NADP(+) to NAD(+) and of NADPH to NADH. Shows a small preference for NADPH over NADP(+). Represses translation and promotes degradation of target mRNA molecules. Plays an important role in post-transcriptional regulation of metabolic genes under circadian control. Exerts a rhythmic post-transcriptional control of genes necessary for metabolic functions including nutrient absorption, glucose/insulin sensitivity, lipid metabolism, adipogenesis, inflammation and osteogenesis. Plays an important role in favoring adipogenesis over osteoblastogenesis and acts as a key regulator of the adipogenesis/osteogenesis balance. Promotes adipogenesis by facilitating PPARG nuclear translocation which activates its transcriptional activity. Regulates circadian expression of NOS2 in the liver and negatively regulates the circadian expression of IGF1 in the bone. Critical for proper development of early embryos. The protein is Nocturnin of Homo sapiens (Human).